Consider the following 914-residue polypeptide: MKRRLMKGISLLTLVFLIGIMLQLSLKSELTAYASSDDPYKQRFLELWEELHDPSNGYFSSHGIPYHAVETLIVEAPDYGHLTTSEAMSYYLWLEALYGKFTGDFSYFMKAWETIEKYMIPTEQDQPNRSMAGYNPAKPATYAPEWEEPSMYPSQLDFSAPVGIDPIYNELVSTYGTNTIYGMHWLLDVDNWYGFGRRADRISSPAYINTFQRGSQESVWETIPQPCWDDLTIGGRNGFLDLFVGDSQYSAQFKYTNAPDADARAIQATYWANQWAKEHGVNLSQYVKKASRMGDYLRYAMFDKYFRKIGDSKQAGTGYDAAHYLLSWYYAWGGGITADWAWIIGCSHVHAGYQNPMTAWILANDPEFKPESPNGANDWAKSLERQLEFYQWLQSAEGAIAGGATNSYKGRYETLPAGISTFYGMAYEEHPVYLDPGSNTWFGFQAWTMQRVAEYYYLTGDTRAEQLLDKWVDWIKSVVRLNSDGTFEIPGNLEWSGQPDTWTGTYTGNPNLHVSVVSYGTDLGAAGSLANALLYYAKTSGDDEARNLAKELLDRMWNLYRDDKGLSAPETREDYVRFFEQEVYVPQGWSGTMPNGDRIEPGVTFLDIRSKYLNDPDYPKLQQAYNEGKAPVFNYHRFWAQCDIAIANGLYSILFGSEQANDSFITPTSATFDKNNQEDISVTVTYNGNTLLGIKSGSSYLIEGVDYIVNGDVIIIKKEFLAGQATGSISLLFDFSAGLDRTLTIDIIDTGGGEEPVEPVEPVEGVLIIQSFNANTQEISNSIMPRFRIYNSGNTSIPLSEVKLRYYYTVDGDKPQNFWCDWASIGSSNVTGTFVKMDGATTGADYYLEIGFTPQAGTLEPGASIEVQGRFSKIDWTDYTQTNDYSFNPTASSYVDFNKITAYISGNLVYGIEP.

The first 33 residues, 1-33 (MKRRLMKGISLLTLVFLIGIMLQLSLKSELTAY), serve as a signal peptide directing secretion. The 152-residue stretch at 763–914 (VEGVLIIQSF…SGNLVYGIEP (152 aa)) folds into the CBM3 domain.

The protein belongs to the glycosyl hydrolase 48 (cellulase L) family.

It catalyses the reaction Hydrolysis of (1-&gt;4)-beta-D-glucosidic linkages in cellulose and cellotetraose, releasing cellobiose from the non-reducing ends of the chains.. This is Exoglucanase-2 (celY) from Thermoclostridium stercorarium (strain ATCC 35414 / DSM 8532 / NCIMB 11754) (Clostridium stercorarium).